The following is a 570-amino-acid chain: MPYKISRAAYAGMFGPTTGDKVRLADTELFIEIEKDFTTYGEEVKFGGGKVIRDGMGQSQVTRADGAVDTVITNAVIVDHSGIYKADIGLKNGRIAAIGKAGNPDMQPGVNIIVGPGTEAIAGEGKIVTAGGMDSHIHFIAPQQIEEALMSGMTCMLGGGTGPAHGTLATTCTPGPWHIARMIEAADAFPMNLAFAGKGNASLPGALTEMVLAGATSLKLHEDWGTTPGAIDCCLSVADDYDVQVMIHTDTLNESGFVEDTIGAIKGRTIHAFHTEGAGGGHAPDIIKICGQPNVIPSSTNPTRPYTVNTIAEHLDMLMVCHHLSPSIPEDIAFAESRIRKETIAAEDILHDIGAFSIISSDSQAMGRVGEVAIRTWQTADKMKRQRGRLKEENGDNDNFRVRRYIAKYTINPAIAHGLSHEIGSVETGKRADLVLWNPAFFGVKPDMVLLGGSIAAAPMGDPNASIPTPQPVHYRPMFASYGKSLTNSSVTFVSQASLDAGLKGRLGVAKELVAVKNTRGGISKASMIHNDLTPEIEVDPETYDVRANGELLTCEPATVLPMAQRYFLF.

One can recognise a Urease domain in the interval 131–570 (GGMDSHIHFI…LPMAQRYFLF (440 aa)). Ni(2+) contacts are provided by His-136, His-138, and Lys-219. Residue Lys-219 is modified to N6-carboxylysine. His-221 lines the substrate pocket. His-248 and His-274 together coordinate Ni(2+). The active-site Proton donor is the His-322. Asp-362 contributes to the Ni(2+) binding site.

It belongs to the metallo-dependent hydrolases superfamily. Urease alpha subunit family. In terms of assembly, heterotrimer of UreA (gamma), UreB (beta) and UreC (alpha) subunits. Three heterotrimers associate to form the active enzyme. The cofactor is Ni cation. Post-translationally, carboxylation allows a single lysine to coordinate two nickel ions.

The protein resides in the cytoplasm. The enzyme catalyses urea + 2 H2O + H(+) = hydrogencarbonate + 2 NH4(+). It functions in the pathway nitrogen metabolism; urea degradation; CO(2) and NH(3) from urea (urease route): step 1/1. The sequence is that of Urease subunit alpha from Rhizobium etli (strain ATCC 51251 / DSM 11541 / JCM 21823 / NBRC 15573 / CFN 42).